The primary structure comprises 20 residues: 39 kDa major outer membrane protein (20 aa).

Its subcellular location is the cell outer membrane. In Aggregatibacter actinomycetemcomitans (Actinobacillus actinomycetemcomitans), this protein is 39 kDa major outer membrane protein.